We begin with the raw amino-acid sequence, 188 residues long: Mediator of RNA polymerase II transcription subunit 11 (188 aa).

Residues 46 to 72 adopt a coiled-coil conformation; the sequence is KNKMEDNANNFKKLITQVENELSAQMQ. A disordered region spans residues 116–188; that stretch reads DPTSDEPQTT…MTDDDDDMEQ (73 aa). Residues 123 to 141 show a composition bias toward acidic residues; the sequence is QTTEEDEEDGSDDLNEDGA. Residues 146–155 show a composition bias toward low complexity; sequence SSTVTSSTTD. Positions 171–180 are enriched in basic and acidic residues; sequence SQEESGRQMT.

This sequence belongs to the Mediator complex subunit 11 family. Component of the Mediator complex.

Its subcellular location is the nucleus. In terms of biological role, component of the Mediator complex, a coactivator involved in the regulated transcription of nearly all RNA polymerase II-dependent genes. Mediator functions as a bridge to convey information from gene-specific regulatory proteins to the basal RNA polymerase II transcription machinery. Mediator is recruited to promoters by direct interactions with regulatory proteins and serves as a scaffold for the assembly of a functional pre-initiation complex with RNA polymerase II and the general transcription factors. The protein is Mediator of RNA polymerase II transcription subunit 11 (mdt-11) of Caenorhabditis elegans.